The chain runs to 789 residues: MHCEVAEALSDKRPKEAPGAPGQGRGPVSLGAHMAFRIAVSGGGCGDGNPLDLLPRLPVPPPRAHDLLRPRSPRDYGVSKTGSGKVNGSYGHSSEKSLLDLDLAEGPSPSCHQGLFLPAGTPPPRGHPPVCEKLLHFPHPNRSPRPQATFVNGSLPAAQHIKQEALPDYQAMVSAHTPLPTHCRAPSSMGLPSDLDFPDRGLTNPAPSCYLLGNEPISDLGPQPEAHLPEGSLKRCCLLGLPPTSSASSSPCASSDINPVIHSSQTALVSCVNGLRSPPLPGDLGGPPKRSRPGPASSDGQEGSLQLEACRKSGFLKQEPMDEFSELFAPHHQGLPPPYPLPQLPTGPGLGGLGLGLAGRMVAGRQACRWVDCCAAYEQQEELVRHIEKSHIDQRKGEDFTCFWAGCVRRYKPFNARYKLLIHMRVHSGEKPNKCMFEGCSKAFSRLENLKIHLRSHTGEKPYLCQHPGCQKAFSNSSDRAKHQRTHLDTKPYACQIPGCSKRYTDPSSLRKHVKAHSAKEQQVRKKLHTGADPEADVLSECLSLQQLQASTLLPASRGKGSQTLSQELLPGVYPGSVTPQNGLASGILSPSHDVPSRHHPLEVPTGSHHHLSPLPTAESTRDGLGPSLLSPMVSPLKGLGPPPLPPASQSQSPGGQSFSTVPSKPTYPSFQSPPPLPSPQGYQGSFHSIQNCFPYADCYRATEPAASRDGLVGDAHGFNPLRPSTYSSLSTPLSAPGYETLAETPCPPALQPQPAEDLVPSGPEDCGFFPNGAFDHCLSHIPSIYTDT.

Composition is skewed to basic and acidic residues over residues 1 to 16 (MHCEVAEALSDKRPKE) and 63 to 74 (RAHDLLRPRSPR). 3 disordered regions span residues 1-29 (MHCEVAEALSDKRPKEAPGAPGQGRGPVS), 53-93 (LLPR…YGHS), and 278-304 (PPLPGDLGGPPKRSRPGPASSDGQEGS). Positions 80 to 92 (KTGSGKVNGSYGH) are enriched in polar residues. Residues 366–391 (QACRWVDCCAAYEQQEELVRHIEKSH) form a C2H2-type 1 zinc finger. The C2H2-type 2; atypical zinc finger occupies 400–427 (FTCFWAGCVRRYKPFNARYKLLIHMRVH). C2H2-type zinc fingers lie at residues 433 to 457 (NKCMFEGCSKAFSRLENLKIHLRSH), 463 to 487 (YLCQHPGCQKAFSNSSDRAKHQRTH), and 493 to 517 (YACQIPGCSKRYTDPSSLRKHVKAH). Disordered regions lie at residues 506–529 (DPSSLRKHVKAHSAKEQQVRKKLH) and 573–684 (VYPG…QGYQ). Residues 511–527 (RKHVKAHSAKEQQVRKK) carry the Bipartite nuclear localization signal motif. Over residues 648-658 (ASQSQSPGGQS) the composition is skewed to low complexity.

It belongs to the GLI C2H2-type zinc-finger protein family. As to quaternary structure, interacts with KLF4. Interacts with POU5F1 and/or POU5F1B. Interacts with SOX2. As to expression, in the adult, expressed highly in placenta and kidney and at lower levels in the testis, brain, colon, brown fat tissue and thymus. During embryo development, expressed in the frontal nasal region, branchial arches, somites, vibrissal and hair follicles, limb buds, craniofacial regions, ventral part of the tail, intervertebral disks, teeth, eyes and kidney.

The protein localises to the nucleus. Its function is as follows. Acts both as a repressor and an ctivator of transcription. Binds to the consensus sequence 5'-GACCACCCAC-3'. By controlling the expression of genes involved in cell differentiation inhibits the lineage commitment of multipotent cells. Prevents, for instance, the differentiation of multipotent mesenchymal cells into adipocyte and osteoblast. The protein is Zinc finger protein GLIS1 of Mus musculus (Mouse).